A 118-amino-acid polypeptide reads, in one-letter code: Non-specific lipid-transfer protein 2A (118 aa).

The first 26 residues, 1–26 (MARAQLVLVALVAAALLLAGPHTTMA), serve as a signal peptide directing secretion. 4 disulfides stabilise this stretch: C30–C77, C40–C54, C55–C100, and C75–C114.

It belongs to the plant LTP family.

Its function is as follows. Plant non-specific lipid-transfer proteins transfer phospholipids as well as galactolipids across membranes. May play a role in wax or cutin deposition in the cell walls of expanding epidermal cells and certain secretory tissues. The sequence is that of Non-specific lipid-transfer protein 2A (LTP2-A) from Oryza sativa subsp. japonica (Rice).